The primary structure comprises 75 residues: DNA-directed RNA polymerase subunit Rpo5 (75 aa).

This sequence belongs to the archaeal Rpo5/eukaryotic RPB5 RNA polymerase subunit family. Part of the RNA polymerase complex.

The protein localises to the cytoplasm. The enzyme catalyses RNA(n) + a ribonucleoside 5'-triphosphate = RNA(n+1) + diphosphate. Functionally, DNA-dependent RNA polymerase (RNAP) catalyzes the transcription of DNA into RNA using the four ribonucleoside triphosphates as substrates. The sequence is that of DNA-directed RNA polymerase subunit Rpo5 from Pyrobaculum aerophilum (strain ATCC 51768 / DSM 7523 / JCM 9630 / CIP 104966 / NBRC 100827 / IM2).